The sequence spans 123 residues: Protein HesB, heterocyst (123 aa).

It belongs to the HesB/IscA family.

In terms of biological role, may be required for efficient nitrogen fixation. The protein is Protein HesB, heterocyst (hesB1) of Trichormus variabilis (strain ATCC 29413 / PCC 7937) (Anabaena variabilis).